A 596-amino-acid polypeptide reads, in one-letter code: Chaperone protein DnaK (596 aa).

A Phosphothreonine; by autocatalysis modification is found at Thr174. The disordered stretch occupies residues Ala576 to Glu596.

The protein belongs to the heat shock protein 70 family.

Its function is as follows. Acts as a chaperone. The polypeptide is Chaperone protein DnaK (Mycoplasmopsis synoviae (strain 53) (Mycoplasma synoviae)).